A 351-amino-acid chain; its full sequence is DNA polymerase IV (351 aa).

Residues 3 to 187 enclose the UmuC domain; that stretch reads ILFVDFDYFF…IDIDEVPGVG (185 aa). Residues Asp7 and Asp105 each contribute to the Mg(2+) site. Residue Glu106 is part of the active site.

The protein belongs to the DNA polymerase type-Y family. The cofactor is Mg(2+).

The catalysed reaction is DNA(n) + a 2'-deoxyribonucleoside 5'-triphosphate = DNA(n+1) + diphosphate. Poorly processive, error-prone DNA polymerase involved in untargeted mutagenesis. Copies undamaged DNA at stalled replication forks, which arise in vivo from mismatched or misaligned primer ends. These misaligned primers can be extended by PolIV. Exhibits no 3'-5' exonuclease (proofreading) activity. May be involved in translesional synthesis. The protein is DNA polymerase IV of Sulfurisphaera tokodaii (strain DSM 16993 / JCM 10545 / NBRC 100140 / 7) (Sulfolobus tokodaii).